The chain runs to 72 residues: MSTRFEGSYLGNAARLADDAVLECKICWHRYDPAVGDEVWQILAGTPFAALPAHWRCPQCDGDREQFMVVDD.

The 52-residue stretch at 19 to 70 (DAVLECKICWHRYDPAVGDEVWQILAGTPFAALPAHWRCPQCDGDREQFMVV) folds into the Rubredoxin-like domain. Fe cation contacts are provided by Cys24, Cys27, Cys57, and Cys60.

The protein belongs to the rubredoxin family. It depends on Fe(3+) as a cofactor.

In terms of biological role, could be an electron transport intermediate in hydrogen oxidation. This is Rubredoxin in uptake hydrogenase operon (hupR) from Azotobacter chroococcum mcd 1.